The sequence spans 185 residues: Elongation factor P (185 aa).

This sequence belongs to the elongation factor P family.

Its subcellular location is the cytoplasm. It functions in the pathway protein biosynthesis; polypeptide chain elongation. In terms of biological role, involved in peptide bond synthesis. Stimulates efficient translation and peptide-bond synthesis on native or reconstituted 70S ribosomes in vitro. Probably functions indirectly by altering the affinity of the ribosome for aminoacyl-tRNA, thus increasing their reactivity as acceptors for peptidyl transferase. In Clostridium botulinum (strain ATCC 19397 / Type A), this protein is Elongation factor P.